A 511-amino-acid polypeptide reads, in one-letter code: Trigger factor (511 aa).

In terms of domain architecture, PPIase FKBP-type spans 168 to 253; the sequence is GDLLTIDFVG…VKEVKAPAEV (86 aa). The tract at residues 446 to 511 is disordered; the sequence is DEHEHHHHDH…KAPAKKKKED (66 aa). Positions 455 to 478 are enriched in basic and acidic residues; sequence HDHDHDHDHDHDHGHDHDHGDEKP. Residues 479–488 show a composition bias toward basic residues; that stretch reads KKKPAAKKAA. A compositionally biased stretch (basic and acidic residues) spans 489–498; it reads AKSDDGEAKP. The span at 499–511 shows a compositional bias: basic residues; sequence AAKKAPAKKKKED.

Belongs to the FKBP-type PPIase family. Tig subfamily.

It is found in the cytoplasm. The catalysed reaction is [protein]-peptidylproline (omega=180) = [protein]-peptidylproline (omega=0). Involved in protein export. Acts as a chaperone by maintaining the newly synthesized protein in an open conformation. Functions as a peptidyl-prolyl cis-trans isomerase. This chain is Trigger factor, found in Parvibaculum lavamentivorans (strain DS-1 / DSM 13023 / NCIMB 13966).